A 159-amino-acid chain; its full sequence is Small ribosomal subunit protein bS6 (159 aa).

Residues valine 93–alanine 151 show a composition bias toward basic and acidic residues. A disordered region spans residues valine 93 to glutamate 159.

The protein belongs to the bacterial ribosomal protein bS6 family.

In terms of biological role, binds together with bS18 to 16S ribosomal RNA. The protein is Small ribosomal subunit protein bS6 of Rhodopseudomonas palustris (strain HaA2).